Here is a 168-residue protein sequence, read N- to C-terminus: Co-chaperone protein HscB homolog (168 aa).

The J domain maps to Asp5–Ser77.

This sequence belongs to the HscB family. Interacts with HscA and stimulates its ATPase activity.

In terms of biological role, co-chaperone involved in the maturation of iron-sulfur cluster-containing proteins. Seems to help targeting proteins to be folded toward HscA. In Bordetella avium (strain 197N), this protein is Co-chaperone protein HscB homolog.